Consider the following 279-residue polypeptide: uncharacterized protein (279 aa).

2 disordered regions span residues tyrosine 50–asparagine 109 and serine 249–leucine 279. Positions asparagine 68–asparagine 109 are enriched in low complexity.

This is an uncharacterized protein from Dictyostelium discoideum (Social amoeba).